Here is a 101-residue protein sequence, read N- to C-terminus: MQLTGSIYPWFTAYALLKSTLMELINSFIPYKSQTGKAPKCLVPYWLSIRLSLLYFKLTEAISFTEKCEKYNISLFDSTFVFGYIVNCFFIIHLNTFLTSQ.

Positions 1–27 are cleaved as a signal peptide; it reads MQLTGSIYPWFTAYALLKSTLMELINS. Transmembrane regions (helical) follow at residues 42–64 and 79–98; these read LVPY…AISF and TFVF…NTFL.

Its subcellular location is the cytoplasm. The protein resides in the nucleus membrane. This is an uncharacterized protein from Schizosaccharomyces pombe (strain 972 / ATCC 24843) (Fission yeast).